Reading from the N-terminus, the 447-residue chain is MEADLLCKYEVALRESEPVKYVGHVTAVRGLLIESRGPHAVVGELCRIVLRRQGRPLIAEVVGLAGSTVKLMSYTDTHGVEVGCAVVAEGAALSVPVGDALLGRVLNAFGKAIDGKGEIYAPLRSEVLRASSNPMERLPITRQMVTGVRVLDSLLAVGCGQRLGIFSGSGVGKSTLMGMIARNTDADVSVIALIGERGREVMDFVAHDLGPEGLKRSVIVSATSDESPLARVRGAYTATAIAEYFRDQGKQVLLLFDSLTRFAKAQREIGLASGELPATRGYTPGVFETLPKLLERAGSFSMGSVTAFYTVLVDGDDLDEPISDAVRGIVDGHIVLSRALAQRNHYPAIDVLQSVSRLAHRVLGADMKEAVRIVRRALAVYAEVEDLVRVGAYQQGSDAELDRAIAMRAELERFLTQGAQERVRFQDTVTSLSMLTGLSIAQPPSGV.

Residue 167-174 (SGSGVGKS) participates in ATP binding.

Belongs to the ATPase alpha/beta chains family.

It localises to the cytoplasm. The catalysed reaction is ATP + H2O + 4 H(+)(in) = ADP + phosphate + 5 H(+)(out). In terms of biological role, probable catalytic subunit of a protein translocase for flagellum-specific export, or a proton translocase involved in local circuits at the flagellum. This Treponema pallidum (strain Nichols) protein is Flagellum-specific ATP synthase (fliI).